The chain runs to 321 residues: Secreted RxLR effector protein 71 (321 aa).

The signal sequence occupies residues Met-1–Ala-23. The short motif at Arg-84 to Arg-87 is the RxLR element. N-linked (GlcNAc...) asparagine glycosylation occurs at Asn-114. Residues Val-210–Gly-237 are disordered.

The protein belongs to the RxLR effector family.

It is found in the secreted. The protein resides in the host cell. Functionally, secreted effector that partially suppresses the host cell death induced by cell death-inducing proteins. In Plasmopara viticola (Downy mildew of grapevine), this protein is Secreted RxLR effector protein 71.